Reading from the N-terminus, the 184-residue chain is Exosome complex protein LRP1 (184 aa).

The interval 157–184 (DSTDHIRKASSKKSKRLDKVGKKKGGKK) is disordered. The span at 164–184 (KASSKKSKRLDKVGKKKGGKK) shows a compositional bias: basic residues.

It belongs to the C1D family. Associates with nuclear form of the RNA exosome complex. Interacts with RRP4, RRP6, RRP45 and RRP46.

The protein localises to the nucleus. Required for exosome-dependent processing of pre-rRNA and small nucleolar RNA (snRNA) precursors. Involved in processing of 35S pre-rRNA at the A0, A1 and A2 sites. Required for activity of RRP6 in 7S pre-rRNA processing. Also has a role in 3'-processing of U4 and U5 small nuclear RNAs (snRNAs). Acts as a mRNA export factor. Mediates mRNA degradation upon UV irradiation. Maintains genome integrity where it is involved in both non-homologous end joining (NHEJ) and homologous recombination pathway repair of double strand DNA breaks. During NHEJ, required for joining 3'-overhanging ends. Also involved in telomere length regulation and maintenance. This is Exosome complex protein LRP1 (LRP1) from Saccharomyces cerevisiae (strain ATCC 204508 / S288c) (Baker's yeast).